The chain runs to 361 residues: Chorismate synthase (361 aa).

NADP(+) is bound at residue arginine 48. FMN-binding positions include 125–127 (RSS), 238–239 (NA), glycine 278, 293–297 (KPTSS), and arginine 319.

It belongs to the chorismate synthase family. As to quaternary structure, homotetramer. It depends on FMNH2 as a cofactor.

The catalysed reaction is 5-O-(1-carboxyvinyl)-3-phosphoshikimate = chorismate + phosphate. It participates in metabolic intermediate biosynthesis; chorismate biosynthesis; chorismate from D-erythrose 4-phosphate and phosphoenolpyruvate: step 7/7. In terms of biological role, catalyzes the anti-1,4-elimination of the C-3 phosphate and the C-6 proR hydrogen from 5-enolpyruvylshikimate-3-phosphate (EPSP) to yield chorismate, which is the branch point compound that serves as the starting substrate for the three terminal pathways of aromatic amino acid biosynthesis. This reaction introduces a second double bond into the aromatic ring system. The protein is Chorismate synthase of Aliivibrio fischeri (strain ATCC 700601 / ES114) (Vibrio fischeri).